The chain runs to 307 residues: Exosome complex component RRP45A (307 aa).

Belongs to the RNase PH family. As to expression, expressed in roots, leaves, stems, buds and siliques.

The protein localises to the cytoplasm. Its subcellular location is the nucleus. In terms of biological role, probable 3'-&gt;5' exoribonuclease involved in the regulation of cuticular wax biosynthesis. Can perform exosomal functions and partially complement the yeast rrp45 null mutant. The polypeptide is Exosome complex component RRP45A (Arabidopsis thaliana (Mouse-ear cress)).